Consider the following 193-residue polypeptide: Ribosomal RNA small subunit methyltransferase G (193 aa).

S-adenosyl-L-methionine contacts are provided by residues Gly-72, Phe-77, 123 to 124, and Arg-137; that span reads IE.

This sequence belongs to the methyltransferase superfamily. RNA methyltransferase RsmG family.

The protein localises to the cytoplasm. The enzyme catalyses guanosine(527) in 16S rRNA + S-adenosyl-L-methionine = N(7)-methylguanosine(527) in 16S rRNA + S-adenosyl-L-homocysteine. Specifically methylates the N7 position of guanine in position 527 of 16S rRNA. In Wolinella succinogenes (strain ATCC 29543 / DSM 1740 / CCUG 13145 / JCM 31913 / LMG 7466 / NCTC 11488 / FDC 602W) (Vibrio succinogenes), this protein is Ribosomal RNA small subunit methyltransferase G.